Here is a 222-residue protein sequence, read N- to C-terminus: GTP cyclohydrolase 1 (222 aa).

Zn(2+) is bound by residues C111, H114, and C182.

This sequence belongs to the GTP cyclohydrolase I family. In terms of assembly, homomer.

The enzyme catalyses GTP + H2O = 7,8-dihydroneopterin 3'-triphosphate + formate + H(+). Its pathway is cofactor biosynthesis; 7,8-dihydroneopterin triphosphate biosynthesis; 7,8-dihydroneopterin triphosphate from GTP: step 1/1. In Shigella boydii serotype 18 (strain CDC 3083-94 / BS512), this protein is GTP cyclohydrolase 1.